A 481-amino-acid chain; its full sequence is Chromosomal replication initiator protein DnaA (481 aa).

Positions 1-71 (MTDLSAFWPQ…ETFAEDILGR (71 aa)) are domain I, interacts with DnaA modulators. The interval 71–143 (RPVTIELRIG…PAIGGGHEST (73 aa)) is domain II. The span at 86 to 96 (ASAPAAASPRS) shows a compositional bias: low complexity. Positions 86–110 (ASAPAAASPRSPGRPAPAPVAATPT) are disordered. The interval 144–361 (RLNPAFTFES…GALKRVVAYS (218 aa)) is domain III, AAA+ region. Residues Gly-189, Gly-191, Lys-192, and Thr-193 each coordinate ATP. Positions 362–481 (RFSNQPISLD…YAALQQMLRN (120 aa)) are domain IV, binds dsDNA.

It belongs to the DnaA family. Oligomerizes as a right-handed, spiral filament on DNA at oriC.

It is found in the cytoplasm. Functionally, plays an essential role in the initiation and regulation of chromosomal replication. ATP-DnaA binds to the origin of replication (oriC) to initiate formation of the DNA replication initiation complex once per cell cycle. Binds the DnaA box (a 9 base pair repeat at the origin) and separates the double-stranded (ds)DNA. Forms a right-handed helical filament on oriC DNA; dsDNA binds to the exterior of the filament while single-stranded (ss)DNA is stabiized in the filament's interior. The ATP-DnaA-oriC complex binds and stabilizes one strand of the AT-rich DNA unwinding element (DUE), permitting loading of DNA polymerase. After initiation quickly degrades to an ADP-DnaA complex that is not apt for DNA replication. Binds acidic phospholipids. This is Chromosomal replication initiator protein DnaA from Laribacter hongkongensis (strain HLHK9).